We begin with the raw amino-acid sequence, 932 residues long: Protein translocase subunit SecA (932 aa).

Residues Gln87, 105 to 109, and Asp515 each bind ATP; that span reads GEGKT. The Zn(2+) site is built by Cys916, Cys918, Cys927, and His928.

Belongs to the SecA family. Monomer and homodimer. Part of the essential Sec protein translocation apparatus which comprises SecA, SecYEG and auxiliary proteins SecDF-YajC and YidC. Zn(2+) serves as cofactor.

It is found in the cell inner membrane. The protein localises to the cytoplasm. The catalysed reaction is ATP + H2O + cellular proteinSide 1 = ADP + phosphate + cellular proteinSide 2.. Part of the Sec protein translocase complex. Interacts with the SecYEG preprotein conducting channel. Has a central role in coupling the hydrolysis of ATP to the transfer of proteins into and across the cell membrane, serving both as a receptor for the preprotein-SecB complex and as an ATP-driven molecular motor driving the stepwise translocation of polypeptide chains across the membrane. This chain is Protein translocase subunit SecA, found in Burkholderia orbicola (strain AU 1054).